A 334-amino-acid chain; its full sequence is GTPase Obg (334 aa).

Positions 4–162 (FDFIDEVKKY…GWIKLELKLL (159 aa)) constitute an Obg domain. In terms of domain architecture, OBG-type G spans 163-330 (AEVGLVGFPN…FKDKIWKLLH (168 aa)). Residues 169–176 (GFPNAGKS), 194–198 (FTTLV), 216–219 (DMPG), 284–287 (SKLD), and 311–313 (SSV) each bind GTP. Residues S176 and T196 each coordinate Mg(2+).

This sequence belongs to the TRAFAC class OBG-HflX-like GTPase superfamily. OBG GTPase family. As to quaternary structure, monomer. It depends on Mg(2+) as a cofactor.

The protein localises to the cytoplasm. An essential GTPase which binds GTP, GDP and possibly (p)ppGpp with moderate affinity, with high nucleotide exchange rates and a fairly low GTP hydrolysis rate. Plays a role in control of the cell cycle, stress response, ribosome biogenesis and in those bacteria that undergo differentiation, in morphogenesis control. This chain is GTPase Obg, found in Amoebophilus asiaticus (strain 5a2).